The sequence spans 473 residues: UDP-glycosyltransferase 71A27 (473 aa).

The Proton acceptor role is filled by His-15. Residue His-15 participates in an anthocyanidin binding. Residue Asp-117 is the Charge relay of the active site. The UDP-alpha-D-glucose site is built by Ala-345, Gln-347, His-362, Trp-365, Asn-366, Ser-367, and Glu-370. An an anthocyanidin-binding site is contributed by Gly-385. 2 residues coordinate UDP-alpha-D-glucose: Glu-386 and Gln-387.

Belongs to the UDP-glycosyltransferase family.

It carries out the reaction (20S)-protopanaxadiol + UDP-alpha-D-glucose = (20S)-ginsenoside C-K + UDP + H(+). The protein operates within secondary metabolite biosynthesis; terpenoid biosynthesis. In terms of biological role, component of the triterpene saponins (e.g. PPD-type ginsenosides or panaxosides) biosynthetic pathways. Glycosyltransferase that catalyzes the biosynthesis of compound K from protopanaxadiol (PPD). This Panax ginseng (Korean ginseng) protein is UDP-glycosyltransferase 71A27.